The following is a 435-amino-acid chain: GTPase Der (435 aa).

EngA-type G domains are found at residues 4–167 (PIVA…SPDA) and 175–350 (ISFS…ENKN). GTP-binding positions include 10–17 (GQPNVGKS), 57–61 (DTGGI), 119–122 (NKAD), 181–188 (GRPNVGKS), 228–232 (DTAGI), and 293–296 (NKWD). The 85-residue stretch at 351–435 (QRIQSSVLND…PIKILPRKRK (85 aa)) folds into the KH-like domain.

It belongs to the TRAFAC class TrmE-Era-EngA-EngB-Septin-like GTPase superfamily. EngA (Der) GTPase family. As to quaternary structure, associates with the 50S ribosomal subunit.

Functionally, GTPase that plays an essential role in the late steps of ribosome biogenesis. This Lactobacillus delbrueckii subsp. bulgaricus (strain ATCC 11842 / DSM 20081 / BCRC 10696 / JCM 1002 / NBRC 13953 / NCIMB 11778 / NCTC 12712 / WDCM 00102 / Lb 14) protein is GTPase Der.